Consider the following 610-residue polypeptide: Elongation factor 4 (610 aa).

The tr-type G domain occupies 11–193; that stretch reads KYIRNFSIVA…QIVTKIPAPA (183 aa). Residues 23–28 and 140–143 contribute to the GTP site; these read DHGKST and NKID.

The protein belongs to the TRAFAC class translation factor GTPase superfamily. Classic translation factor GTPase family. LepA subfamily.

Its subcellular location is the cell membrane. It carries out the reaction GTP + H2O = GDP + phosphate + H(+). Its function is as follows. Required for accurate and efficient protein synthesis under certain stress conditions. May act as a fidelity factor of the translation reaction, by catalyzing a one-codon backward translocation of tRNAs on improperly translocated ribosomes. Back-translocation proceeds from a post-translocation (POST) complex to a pre-translocation (PRE) complex, thus giving elongation factor G a second chance to translocate the tRNAs correctly. Binds to ribosomes in a GTP-dependent manner. This Levilactobacillus brevis (strain ATCC 367 / BCRC 12310 / CIP 105137 / JCM 1170 / LMG 11437 / NCIMB 947 / NCTC 947) (Lactobacillus brevis) protein is Elongation factor 4.